The following is a 296-amino-acid chain: Elongation factor Ts (296 aa).

Positions 82 to 85 (TDFV) are involved in Mg(2+) ion dislocation from EF-Tu.

This sequence belongs to the EF-Ts family.

Its subcellular location is the cytoplasm. Its function is as follows. Associates with the EF-Tu.GDP complex and induces the exchange of GDP to GTP. It remains bound to the aminoacyl-tRNA.EF-Tu.GTP complex up to the GTP hydrolysis stage on the ribosome. The chain is Elongation factor Ts from Coxiella burnetii (strain CbuG_Q212) (Coxiella burnetii (strain Q212)).